A 193-amino-acid chain; its full sequence is Ribosomal RNA small subunit methyltransferase G (193 aa).

S-adenosyl-L-methionine is bound by residues glycine 72, phenylalanine 77, 123 to 124 (IE), and arginine 137.

The protein belongs to the methyltransferase superfamily. RNA methyltransferase RsmG family.

The protein localises to the cytoplasm. The enzyme catalyses guanosine(527) in 16S rRNA + S-adenosyl-L-methionine = N(7)-methylguanosine(527) in 16S rRNA + S-adenosyl-L-homocysteine. Its function is as follows. Specifically methylates the N7 position of guanine in position 527 of 16S rRNA. This Wolinella succinogenes (strain ATCC 29543 / DSM 1740 / CCUG 13145 / JCM 31913 / LMG 7466 / NCTC 11488 / FDC 602W) (Vibrio succinogenes) protein is Ribosomal RNA small subunit methyltransferase G.